A 565-amino-acid chain; its full sequence is Translation machinery-associated protein 64 (565 aa).

One can recognise a PUA domain in the interval 89 to 170 (LPIVLTHGFV…VAVKIIHHFN (82 aa)). An SWIB/MDM2 domain is found at 362 to 447 (TLYKPFNLAK…GEILHPLLTN (86 aa)). The SUI1 domain occupies 475–547 (IKIITEMKIG…SIIDHLNKLG (73 aa)).

The protein belongs to the eIF2D family. Interacts with the 40S ribosomal subunit.

This is Translation machinery-associated protein 64 (TMA64) from Saccharomyces cerevisiae (strain ATCC 204508 / S288c) (Baker's yeast).